Consider the following 677-residue polypeptide: WD and tetratricopeptide repeats protein 1 (677 aa).

WD repeat units lie at residues 45 to 84 (GHSG…KLLS), 88 to 129 (GHTA…TIHM), 132 to 172 (DHTN…KHSE), 182 to 222 (GPMV…NHRK), and 265 to 305 (RLRV…RPYT). A Phosphoserine modification is found at serine 352. 2 TPR repeats span residues 361 to 394 (LERV…APHN) and 396 to 431 (MLYG…NPCH). The interval 489 to 509 (EEKKAAGGGGGPVRLRSTSRK) is disordered. Residue serine 511 is modified to Phosphoserine. WD repeat units lie at residues 535-575 (NTTT…LVRV) and 578-617 (GDES…EDLT). Positions 655 to 677 (SSGGAGASDDEDSAEGQVQCRPS) are disordered.

The protein operates within protein modification; protein ubiquitination. Its function is as follows. May function as a substrate receptor for CUL4-DDB1 E3 ubiquitin-protein ligase complex. This is WD and tetratricopeptide repeats protein 1 (Wdtc1) from Mus musculus (Mouse).